We begin with the raw amino-acid sequence, 625 residues long: Inactive glucose-6-phosphate 1-dehydrogenase 4, chloroplastic (625 aa).

The transit peptide at methionine 1–valine 49 directs the protein to the chloroplast. NADP(+) contacts are provided by residues glycine 160–arginine 167 and arginine 194. The cysteines at positions 212 and 220 are disulfide-linked. Lysine 297 lines the NADP(+) pocket. D-glucose 6-phosphate contacts are provided by residues lysine 297, histidine 327–arginine 331, glutamate 365, and aspartate 382. Histidine 387 functions as the Proton acceptor in the catalytic mechanism. The NADP(+) site is built by arginine 471, arginine 480, arginine 513, and arginine 606.

This sequence belongs to the glucose-6-phosphate dehydrogenase family. In terms of assembly, forms homodimer. Interacts with G6PD1. Expressed in leaves, stems and buds.

It is found in the plastid. The protein resides in the chloroplast stroma. In terms of biological role, seems to be a catalytically inactive enzyme. This is Inactive glucose-6-phosphate 1-dehydrogenase 4, chloroplastic from Arabidopsis thaliana (Mouse-ear cress).